Consider the following 142-residue polypeptide: Large-conductance mechanosensitive channel (142 aa).

Helical transmembrane passes span 10-30 (FAVK…GAFG), 40-60 (LIMP…LFIV), and 86-106 (GNFI…FVMV).

Belongs to the MscL family. In terms of assembly, homopentamer.

The protein localises to the cell inner membrane. Functionally, channel that opens in response to stretch forces in the membrane lipid bilayer. May participate in the regulation of osmotic pressure changes within the cell. The protein is Large-conductance mechanosensitive channel of Acidovorax ebreus (strain TPSY) (Diaphorobacter sp. (strain TPSY)).